We begin with the raw amino-acid sequence, 385 residues long: 1-deoxy-D-xylulose 5-phosphate reductoisomerase (385 aa).

NADPH-binding residues include Thr-10, Gly-11, Ser-12, Ile-13, Gly-36, Asn-38, and Asn-121. Lys-122 serves as a coordination point for 1-deoxy-D-xylulose 5-phosphate. Glu-123 contacts NADPH. Asp-147 contributes to the Mn(2+) binding site. Positions 148, 149, 173, and 196 each coordinate 1-deoxy-D-xylulose 5-phosphate. Glu-149 contacts Mn(2+). Residue Gly-202 coordinates NADPH. Positions 209, 214, 215, and 218 each coordinate 1-deoxy-D-xylulose 5-phosphate. Glu-218 serves as a coordination point for Mn(2+).

This sequence belongs to the DXR family. Mg(2+) serves as cofactor. The cofactor is Mn(2+).

The catalysed reaction is 2-C-methyl-D-erythritol 4-phosphate + NADP(+) = 1-deoxy-D-xylulose 5-phosphate + NADPH + H(+). It functions in the pathway isoprenoid biosynthesis; isopentenyl diphosphate biosynthesis via DXP pathway; isopentenyl diphosphate from 1-deoxy-D-xylulose 5-phosphate: step 1/6. Catalyzes the NADPH-dependent rearrangement and reduction of 1-deoxy-D-xylulose-5-phosphate (DXP) to 2-C-methyl-D-erythritol 4-phosphate (MEP). The sequence is that of 1-deoxy-D-xylulose 5-phosphate reductoisomerase from Exiguobacterium sp. (strain ATCC BAA-1283 / AT1b).